Reading from the N-terminus, the 378-residue chain is tRNA-specific 2-thiouridylase MnmA (378 aa).

ATP-binding positions include 6-13 and L32; that span reads AMSGGVDS. The active-site Nucleophile is C101. C101 and C199 are disulfide-bonded. Residue G125 coordinates ATP. The tract at residues 148 to 150 is interaction with tRNA; it reads KDQ. Residue C199 is the Cysteine persulfide intermediate of the active site.

Belongs to the MnmA/TRMU family.

Its subcellular location is the cytoplasm. The catalysed reaction is S-sulfanyl-L-cysteinyl-[protein] + uridine(34) in tRNA + AH2 + ATP = 2-thiouridine(34) in tRNA + L-cysteinyl-[protein] + A + AMP + diphosphate + H(+). In terms of biological role, catalyzes the 2-thiolation of uridine at the wobble position (U34) of tRNA, leading to the formation of s(2)U34. This is tRNA-specific 2-thiouridylase MnmA from Micrococcus luteus (strain ATCC 4698 / DSM 20030 / JCM 1464 / CCM 169 / CCUG 5858 / IAM 1056 / NBRC 3333 / NCIMB 9278 / NCTC 2665 / VKM Ac-2230) (Micrococcus lysodeikticus).